The sequence spans 820 residues: Protein bicaudal D homolog 2 (820 aa).

Residue Ser2 is modified to N-acetylserine. Positions 20 to 270 (EWLRAEVKRL…LSHYMSINDS (251 aa)) form a coiled coil. Residues 25 to 400 (EVKRLSHELA…RLTENLSALR (376 aa)) form an interaction with DYNLL1, DYNC1H1, DYNC1I2, DCTN1 and DCTN2 region. 3 positions are modified to phosphoserine: Ser190, Ser224, and Ser320. The segment at 313-332 (SSLDNKTSTPRKDGLAPPSP) is disordered. Thr321 carries the post-translational modification Phosphothreonine. The interaction with KIF5A stretch occupies residues 336 to 595 (SDLLSELHIS…LLATEVGRAD (260 aa)). Positions 340–539 (SELHISEIQK…VTFSEELANL (200 aa)) form a coiled coil. 2 positions are modified to phosphoserine: Ser345 and Ser397. Disordered regions lie at residues 400 to 427 (RRLQ…GDYY), 563 to 582 (QGKA…PVLL), 591 to 618 (VGRA…DPRR), and 799 to 820 (HEQT…SPSL). Positions 404–424 (AGKERQTSLDNEKDRDSHEDG) are enriched in basic and acidic residues. Phosphoserine is present on residues Ser570 and Ser578. The interval 586–820 (LLATEVGRAD…SKAKPASPSL (235 aa)) is interaction with RANBP2. At Thr598 the chain carries Phosphothreonine. The span at 602 to 614 (SPSPSSSLPSPLS) shows a compositional bias: low complexity. Residues 662–804 (DKDKEALMEE…LELDHEQTRR (143 aa)) adopt a coiled-coil conformation. The interaction with RAB6A stretch occupies residues 662–810 (DKDKEALMEE…QTRRGRSKAA (149 aa)). Residue Ser819 is modified to Phosphoserine.

It belongs to the BicD family. In terms of assembly, part of a tripartite complex with dynein and dynactin, acts an adapter linking the dynein motor complex and dynactin. Interacts with CPNE4 (via VWFA domain). Interacts with NEK9. Interacts with DCTN2. Interacts with RAB6A. Interacts with DNAI1. Interacts with DYNLL1, DYNC1H1, DYNC1I2 and DCTN1. Forms a complex with dynein and dynactin. The dynein-dynactin-BICD2 ternary complex (DDB) binds preferentially to tyrosinated microtubules than to detyrosinated microtubules. Interacts with RANBP2, RAB6A and KIF5A. Interacts with KIF1C. Post-translationally, phosphorylated by NEK9 in vitro. Ubiquitously expressed with high expression in the spinal cord.

It is found in the golgi apparatus. The protein localises to the cytoplasm. The protein resides in the cytoskeleton. Its subcellular location is the nucleus. It localises to the nuclear pore complex. It is found in the nucleus envelope. Acts as an adapter protein linking the dynein motor complex to various cargos and converts dynein from a non-processive to a highly processive motor in the presence of dynactin. Facilitates and stabilizes the interaction between dynein and dynactin and activates dynein processivity (the ability to move along a microtubule for a long distance without falling off the track). Facilitates the binding of RAB6A to the Golgi by stabilizing its GTP-bound form. Regulates coat complex coatomer protein I (COPI)-independent Golgi-endoplasmic reticulum transport via its interaction with RAB6A and recruitment of the dynein-dynactin motor complex. Contributes to nuclear and centrosomal positioning prior to mitotic entry through regulation of both dynein and kinesin-1. During G2 phase of the cell cycle, associates with RANBP2 at the nuclear pores and recruits dynein and dynactin to the nuclear envelope to ensure proper positioning of the nucleus relative to centrosomes prior to the onset of mitosis. In Mus musculus (Mouse), this protein is Protein bicaudal D homolog 2 (Bicd2).